Reading from the N-terminus, the 174-residue chain is RNA polymerase sigma factor CarQ (174 aa).

Positions 39 to 52 match the Polymerase core binding motif; it reads DLLQATFLSVIRSR. Residues 86-106 are disordered; that stretch reads YASREDTATPASAAPDDSDPS. Residues 136–155 constitute a DNA-binding region (H-T-H motif); the sequence is FEEIGALRGISPGAARLRAH.

This sequence belongs to the sigma-70 factor family. ECF subfamily.

Sigma factors are initiation factors that promote the attachment of RNA polymerase to specific initiation sites and are then released. This sigma factor regulates genes for the light induced biosynthesis of carotenoids. This is RNA polymerase sigma factor CarQ (carQ) from Myxococcus xanthus.